The following is a 489-amino-acid chain: N-succinylglutamate 5-semialdehyde dehydrogenase (489 aa).

223 to 228 (GSSRTG) is an NAD(+) binding site. Residues glutamate 246 and cysteine 280 contribute to the active site.

The protein belongs to the aldehyde dehydrogenase family. AstD subfamily.

The catalysed reaction is N-succinyl-L-glutamate 5-semialdehyde + NAD(+) + H2O = N-succinyl-L-glutamate + NADH + 2 H(+). It functions in the pathway amino-acid degradation; L-arginine degradation via AST pathway; L-glutamate and succinate from L-arginine: step 4/5. Catalyzes the NAD-dependent reduction of succinylglutamate semialdehyde into succinylglutamate. The sequence is that of N-succinylglutamate 5-semialdehyde dehydrogenase from Aeromonas hydrophila subsp. hydrophila (strain ATCC 7966 / DSM 30187 / BCRC 13018 / CCUG 14551 / JCM 1027 / KCTC 2358 / NCIMB 9240 / NCTC 8049).